Reading from the N-terminus, the 426-residue chain is Histidinol dehydrogenase (426 aa).

Tyr-123, Gln-185, and Asn-208 together coordinate NAD(+). Substrate-binding residues include Ser-231, Gln-253, and His-256. Positions 253 and 256 each coordinate Zn(2+). Catalysis depends on proton acceptor residues Glu-321 and His-322. The substrate site is built by His-322, Asp-355, Glu-409, and His-414. Asp-355 provides a ligand contact to Zn(2+). His-414 contributes to the Zn(2+) binding site.

It belongs to the histidinol dehydrogenase family. Requires Zn(2+) as cofactor.

The enzyme catalyses L-histidinol + 2 NAD(+) + H2O = L-histidine + 2 NADH + 3 H(+). Its pathway is amino-acid biosynthesis; L-histidine biosynthesis; L-histidine from 5-phospho-alpha-D-ribose 1-diphosphate: step 9/9. In terms of biological role, catalyzes the sequential NAD-dependent oxidations of L-histidinol to L-histidinaldehyde and then to L-histidine. This Bacillus licheniformis (strain ATCC 14580 / DSM 13 / JCM 2505 / CCUG 7422 / NBRC 12200 / NCIMB 9375 / NCTC 10341 / NRRL NRS-1264 / Gibson 46) protein is Histidinol dehydrogenase.